A 518-amino-acid chain; its full sequence is Glutamate--cysteine ligase (518 aa).

This sequence belongs to the glutamate--cysteine ligase type 1 family. Type 1 subfamily.

It carries out the reaction L-cysteine + L-glutamate + ATP = gamma-L-glutamyl-L-cysteine + ADP + phosphate + H(+). It participates in sulfur metabolism; glutathione biosynthesis; glutathione from L-cysteine and L-glutamate: step 1/2. This is Glutamate--cysteine ligase from Shigella flexneri serotype 5b (strain 8401).